Consider the following 208-residue polypeptide: uncharacterized protein (208 aa).

3 disordered regions span residues P91–D115, Q127–G156, and N182–K208. Residues Q127 to P136 are compositionally biased toward polar residues.

This is an uncharacterized protein from Rattus norvegicus (Rat).